A 339-amino-acid polypeptide reads, in one-letter code: tRNA(Ile)-lysidine synthase (339 aa).

34 to 39 is an ATP binding site; the sequence is SGGPDS.

It belongs to the tRNA(Ile)-lysidine synthase family.

Its subcellular location is the cytoplasm. The catalysed reaction is cytidine(34) in tRNA(Ile2) + L-lysine + ATP = lysidine(34) in tRNA(Ile2) + AMP + diphosphate + H(+). Ligates lysine onto the cytidine present at position 34 of the AUA codon-specific tRNA(Ile) that contains the anticodon CAU, in an ATP-dependent manner. Cytidine is converted to lysidine, thus changing the amino acid specificity of the tRNA from methionine to isoleucine. This Methylobacterium nodulans (strain LMG 21967 / CNCM I-2342 / ORS 2060) protein is tRNA(Ile)-lysidine synthase.